The chain runs to 308 residues: 4-hydroxy-tetrahydrodipicolinate synthase (308 aa).

Thr56 serves as a coordination point for pyruvate. The active-site Proton donor/acceptor is Tyr144. Catalysis depends on Lys172, which acts as the Schiff-base intermediate with substrate. Position 212 (Val212) interacts with pyruvate.

Belongs to the DapA family. Homotetramer; dimer of dimers.

The protein resides in the cytoplasm. The enzyme catalyses L-aspartate 4-semialdehyde + pyruvate = (2S,4S)-4-hydroxy-2,3,4,5-tetrahydrodipicolinate + H2O + H(+). The protein operates within amino-acid biosynthesis; L-lysine biosynthesis via DAP pathway; (S)-tetrahydrodipicolinate from L-aspartate: step 3/4. Functionally, catalyzes the condensation of (S)-aspartate-beta-semialdehyde [(S)-ASA] and pyruvate to 4-hydroxy-tetrahydrodipicolinate (HTPA). The chain is 4-hydroxy-tetrahydrodipicolinate synthase from Kineococcus radiotolerans (strain ATCC BAA-149 / DSM 14245 / SRS30216).